The chain runs to 141 residues: Protein stum homolog (141 aa).

A Phosphoserine modification is found at S26. 2 consecutive transmembrane segments (helical) span residues 51–71 and 87–107; these read FPVAVICLFLNTFVPGLGTFV and RHVCCVFWLNIAAALIQILTA.

This sequence belongs to the SPEC3 family. Stum subfamily.

The protein resides in the membrane. In Homo sapiens (Human), this protein is Protein stum homolog.